The chain runs to 675 residues: Protein PALS1 (675 aa).

Disordered stretches follow at residues 1–34 (MTTSHMNGHVTEESDSEVKNVDLASPEEHQKHRE) and 51–78 (RRSAQLERIRQQQEDMRRRREEEGKKQE). Residues 1–345 (MTTSHMNGHV…QQIKPPPAKE (345 aa)) are required for the correct localization of PALS1 and PATJ at cell-cell contacts and the normal formation of tight junctions and adherens junctions. Basic and acidic residues-rich tracts occupy residues 10-34 (VTEESDSEVKNVDLASPEEHQKHRE) and 54-78 (AQLERIRQQQEDMRRRREEEGKKQE). Phosphoserine is present on residues serine 14 and serine 25. The interval 21–140 (VDLASPEEHQ…LKHIQHTLVD (120 aa)) is interaction with PARD6B. Residues serine 83 and serine 84 each carry the phosphoserine modification. L27 domains lie at 120–177 (KILE…NKAS) and 179–235 (PFPL…MQLE). The interval 181 to 243 (PLISNAQDLA…LEPITDERVY (63 aa)) is interaction with LIN7C. Residues 256–336 (IVRIEKARDI…TLTFVLIPSQ (81 aa)) form the PDZ domain. The SH3 domain maps to 345–417 (ETVIHVKAHF…PGKSFQQQRE (73 aa)). The region spanning 479–660 (KRPIILIGPQ…AYQELLRLIN (182 aa)) is the Guanylate kinase-like domain. 486 to 493 (GPQNCGQN) provides a ligand contact to ATP.

It belongs to the MAGUK family. Heterodimer with MPP1. Forms a heterotrimeric complex composed of PALS1, LIN7B and PATJ; the N-terminal L27 domain of PALS1 interacts with the L27 domain of PATJ and the C-terminal L27 domain of PALS1 interacts with the L27 domain of LIN7B. Component of a complex composed of PALS1, CRB1 and MPP4. Component of a complex whose core is composed of ARHGAP17, AMOT, PALS1, PATJ and PARD3/PAR3. Component of a complex composed of PALS1, CRB1 and EPB41L5. Within the complex, interacts (via HOOK domain) with EPB41L5 (via FERM domain), and interacts with CRB1 (via intracellular domain). Component of a complex composed of PALS1, MPP3 and CRB1; PALS1 acts as a bridging protein between MPP3 (via guanylate kinase-like domain) and CRB1. Component of a complex composed of CRB3, PALS1 and PATJ. As part of the Crumbs complex; interacts with WWP1, the interaction is enhanced by AMOTL2 and facilitates WWP1 localization to the plasma membrane. The Crumbs complex promotes monoubiquitination of AMOTL2 by WWP1, which activates the Hippo signaling pathway. Interacts (via PDZ domain) with PATJ (via N-terminus). Interacts with EZR. Interacts (via PDZ domain) with CRB1 (via C-terminal ERLI motif). While the PDZ domain is sufficient for interaction with CRB1, the adjacent SH3 and guanylate kinase-like domains are likely to contribute to a high affinity interaction. Interacts with WWTR1/TAZ (via WW domain). Interacts with MPP7. Interacts (via PDZ domain) with CRB3 (via C-terminus). Interacts with LIN7C. Interacts with MPDZ. Interacts with PARD6B. Interacts with SC6A1. Interacts with CDH5; the interaction promotes PALS1 localization to cell junctions and is required for CDH5-mediated vascular lumen formation and endothelial cell. Interacts with NPHP1 (via coiled coil and SH3 domains). Interacts with NPHP4. Interacts with CRB2. In terms of assembly, (Microbial infection) Interacts (via PDZ domain) with human coronaviruses SARS-CoV and, probably, SARS-CoV-2 envelope small membrane protein E (via C-terminus); this inhibits the interaction between PALS1 and CRB3. As to expression, expressed at the outer limiting membrane in the retina (at protein level). Expressed in T lymphocytes (at protein level). Expressed in the kidney (at protein level).

The protein localises to the golgi apparatus. Its subcellular location is the cell membrane. It localises to the endomembrane system. The protein resides in the cell junction. It is found in the tight junction. The protein localises to the adherens junction. Its subcellular location is the cell projection. It localises to the axon. The protein resides in the perikaryon. It is found in the apical cell membrane. The protein localises to the endoplasmic reticulum-Golgi intermediate compartment. Its function is as follows. Plays a role in tight junction biogenesis and in the establishment of cell polarity in epithelial cells. Also involved in adherens junction biogenesis by ensuring correct localization of the exocyst complex protein EXOC4/SEC8 which allows trafficking of adherens junction structural component CDH1 to the cell surface. Plays a role through its interaction with CDH5 in vascular lumen formation and endothelial membrane polarity. Required during embryonic and postnatal retinal development. Required for the maintenance of cerebellar progenitor cells in an undifferentiated proliferative state, preventing premature differentiation, and is required for cerebellar histogenesis, fissure formation, cerebellar layer organization and cortical development. Plays a role in neuronal progenitor cell survival, potentially via promotion of mTOR signaling. Plays a role in the radial and longitudinal extension of the myelin sheath in Schwann cells. May modulate SC6A1/GAT1-mediated GABA uptake by stabilizing the transporter. Plays a role in the T-cell receptor-mediated activation of NF-kappa-B. Required for localization of EZR to the apical membrane of parietal cells and may play a role in the dynamic remodeling of the apical cytoskeleton. Required for the normal polarized localization of the vesicular marker STX4. Required for the correct trafficking of the myelin proteins PMP22 and MAG. Involved in promoting phosphorylation and cytoplasmic retention of transcriptional coactivators YAP1 and WWTR1/TAZ which leads to suppression of TGFB1-dependent transcription of target genes such as CCN2/CTGF, SERPINE1/PAI1, SNAI1/SNAIL1 and SMAD7. (Microbial infection) Acts as an interaction partner for human coronaviruses SARS-CoV and, probably, SARS-CoV-2 envelope protein E which results in delayed formation of tight junctions and disregulation of cell polarity. This is Protein PALS1 from Homo sapiens (Human).